Reading from the N-terminus, the 224-residue chain is ATP-dependent dethiobiotin synthetase BioD (224 aa).

N13–I18 is a binding site for ATP. Position 17 (T17) interacts with Mg(2+). K38 is an active-site residue. Residue S42 coordinates substrate. ATP contacts are provided by residues D55, E116–G119, N176–N177, and N211. D55 and E116 together coordinate Mg(2+).

It belongs to the dethiobiotin synthetase family. Homodimer. It depends on Mg(2+) as a cofactor.

The protein resides in the cytoplasm. The enzyme catalyses (7R,8S)-7,8-diammoniononanoate + CO2 + ATP = (4R,5S)-dethiobiotin + ADP + phosphate + 3 H(+). The protein operates within cofactor biosynthesis; biotin biosynthesis; biotin from 7,8-diaminononanoate: step 1/2. In terms of biological role, catalyzes a mechanistically unusual reaction, the ATP-dependent insertion of CO2 between the N7 and N8 nitrogen atoms of 7,8-diaminopelargonic acid (DAPA, also called 7,8-diammoniononanoate) to form a ureido ring. The polypeptide is ATP-dependent dethiobiotin synthetase BioD (Buchnera aphidicola subsp. Acyrthosiphon pisum (strain APS) (Acyrthosiphon pisum symbiotic bacterium)).